The primary structure comprises 117 residues: Immunoglobulin heavy variable 3-5 (117 aa).

A signal peptide spans 1–18; sequence MKMFTLLYLLTVVPGILS. One can recognise an Ig-like domain in the interval 19–117; it reads DVQLQESGPG…EDTATYYCAR (99 aa). The cysteines at positions 40 and 115 are disulfide-linked.

This is Immunoglobulin heavy variable 3-5 from Mus musculus (Mouse).